The primary structure comprises 136 residues: Ribonuclease VapC47 (136 aa).

One can recognise a PINc domain in the interval 2–104 (IYMDTSALTK…AIHLAAAAQI (103 aa)). Mg(2+)-binding residues include aspartate 5 and aspartate 94.

Belongs to the PINc/VapC protein family. It depends on Mg(2+) as a cofactor.

Its function is as follows. Toxic component of a type II toxin-antitoxin (TA) system. An RNase. Its toxic effect on colony formation is neutralized by coexpression with cognate antitoxin VapB47. In Mycobacterium tuberculosis (strain CDC 1551 / Oshkosh), this protein is Ribonuclease VapC47.